The chain runs to 326 residues: Peroxidase 3 (326 aa).

Positions 1 to 24 (MNCLIAIALSVSFFLVGIVGPIQA) are cleaved as a signal peptide. Disulfide bonds link Cys35-Cys113, Cys68-Cys73, Cys119-Cys321, and Cys198-Cys231. The Proton acceptor role is filled by His66. Ca(2+)-binding residues include Asp67, Val70, Gly72, Asp74, and Ser76. 2 N-linked (GlcNAc...) asparagine glycosylation sites follow: Asn80 and Asn138. Position 161 (Pro161) interacts with substrate. N-linked (GlcNAc...) asparagine glycosylation occurs at Asn166. His191 serves as a coordination point for heme b. Residue Thr192 coordinates Ca(2+). N-linked (GlcNAc...) asparagine glycosylation is found at Asn207 and Asn237. The Ca(2+) site is built by Asp244, Ser247, and Asp252.

The protein belongs to the peroxidase family. Classical plant (class III) peroxidase subfamily. Requires heme b as cofactor. Ca(2+) is required as a cofactor. In terms of tissue distribution, expressed in root cells.

The protein localises to the secreted. The enzyme catalyses 2 a phenolic donor + H2O2 = 2 a phenolic radical donor + 2 H2O. In terms of biological role, removal of H(2)O(2), oxidation of toxic reductants, biosynthesis and degradation of lignin, suberization, auxin catabolism, response to environmental stresses such as wounding, pathogen attack and oxidative stress. These functions might be dependent on each isozyme/isoform in each plant tissue. The chain is Peroxidase 3 (PER3) from Arabidopsis thaliana (Mouse-ear cress).